The chain runs to 299 residues: Tyrosine recombinase XerC (299 aa).

One can recognise a Core-binding (CB) domain in the interval 1–85 (MDQHLDAYCM…AVRGFYKYLN (85 aa)). In terms of domain architecture, Tyr recombinase spans 106 to 285 (RLPKTLDTDR…DFQHLATVYD (180 aa)). Active-site residues include R146, K170, H237, R240, and H263. The active-site O-(3'-phospho-DNA)-tyrosine intermediate is Y272.

This sequence belongs to the 'phage' integrase family. XerC subfamily. As to quaternary structure, forms a cyclic heterotetrameric complex composed of two molecules of XerC and two molecules of XerD.

Its subcellular location is the cytoplasm. Functionally, site-specific tyrosine recombinase, which acts by catalyzing the cutting and rejoining of the recombining DNA molecules. The XerC-XerD complex is essential to convert dimers of the bacterial chromosome into monomers to permit their segregation at cell division. It also contributes to the segregational stability of plasmids. The sequence is that of Tyrosine recombinase XerC from Pseudomonas syringae pv. syringae (strain B728a).